The chain runs to 2774 residues: Teneurin-2 (2774 aa).

Positions 1 to 375 constitute a Teneurin N-terminal domain; the sequence is MDVKDRRHRS…KPSKYCSWKC (375 aa). Residues 1 to 379 lie on the Cytoplasmic side of the membrane; sequence MDVKDRRHRS…YCSWKCAALS (379 aa). Phosphoserine occurs at positions 90 and 124. Residues 111-271 form a disordered region; sequence TGSDADSDTE…HHHSSANSLN (161 aa). Residues 141-155 are compositionally biased toward polar residues; it reads SSGLSSRENSALTLT. Threonine 155 bears the Phosphothreonine mark. Phosphoserine is present on serine 157. Over residues 159–168 the composition is skewed to basic and acidic residues; the sequence is NENKSDDENG. A compositionally biased stretch (low complexity) spans 176 to 188; sequence SPSLLPSAQLPSS. The span at 202–211 shows a compositional bias: polar residues; that stretch reads DSNTSHQIMD. A compositionally biased stretch (low complexity) spans 229–240; that stretch reads SGPQQASSSGPP. The chain crosses the membrane as a helical span at residues 380 to 400; sequence AIAAALLLAILLAYFIAMHLL. Residues 401 to 2774 lie on the Extracellular side of the membrane; the sequence is GLNWQLQPAD…FLRQNEMGKR (2374 aa). Residues asparagine 443 and asparagine 482 are each glycosylated (N-linked (GlcNAc...) asparagine). 8 consecutive EGF-like domains span residues 575–603, 598–634, 636–668, 669–701, 702–735, 738–766, 769–797, and 808–841; these read DCPR…ADCA, LGAD…AECD, PMNQ…EHCE, EVDC…NCEL, ARVQ…PDCS, VCSV…AACD, VCHP…EHCT, and DGCP…PGCN. 22 disulfides stabilise this stretch: cysteine 576-cysteine 586, cysteine 580-cysteine 591, cysteine 593-cysteine 602, cysteine 611-cysteine 622, cysteine 624-cysteine 633, cysteine 640-cysteine 651, cysteine 645-cysteine 656, cysteine 658-cysteine 667, cysteine 672-cysteine 683, cysteine 677-cysteine 688, cysteine 690-cysteine 699, cysteine 710-cysteine 723, cysteine 725-cysteine 734, cysteine 739-cysteine 749, cysteine 743-cysteine 754, cysteine 756-cysteine 765, cysteine 770-cysteine 780, cysteine 774-cysteine 785, cysteine 787-cysteine 796, cysteine 810-cysteine 820, cysteine 814-cysteine 829, and cysteine 831-cysteine 840. Residues asparagine 925, asparagine 948, and asparagine 1267 are each glycosylated (N-linked (GlcNAc...) asparagine). NHL repeat units follow at residues 1272-1316, 1342-1386, 1401-1452, 1474-1501, and 1530-1573; these read LELR…VKSL, ARCG…NGII, LSCD…IAGR, LESA…INRL, and CYSG…VSKN. Residues 1583-1602 form a YD 1 repeat; the sequence is YEAASPGEQELYVFNADGIH. Asparagine 1616 carries an N-linked (GlcNAc...) asparagine glycan. 3 YD repeats span residues 1619 to 1639, 1682 to 1701, and 1702 to 1724; these read YSTD…LKIR, YDGN…WTTF, and YDYD…TSLH. 5 N-linked (GlcNAc...) asparagine glycosylation sites follow: asparagine 1712, asparagine 1749, asparagine 1773, asparagine 1807, and asparagine 1892. 18 YD repeats span residues 1895–1914, 1936–1954, 1955–1975, 1982–1999, 2000–2021, 2022–2039, 2042–2062, 2065–2085, 2093–2113, 2119–2136, 2137–2163, 2165–2178, 2179–2202, 2205–2225, 2226–2246, 2248–2268, 2280–2300, and 2302–2322; these read YFFN…ERTD, YLDK…YIFE, YDSS…HSMS, YIRN…VIFD, YSDD…VFYK, YGKL…TAVT, YDET…FSCT, YRKI…EGMV, YHDN…TPLP, YDEI…GVIY, YDIN…IKEV, YEMF…MTVQ, YDSM…TKYT, YDGD…WRYS, YDLN…LMPL, YDLR…DDDG, YNSK…SVQY, and YDGV…LQYF. Asparagine 1993 is a glycosylation site (N-linked (GlcNAc...) asparagine). N-linked (GlcNAc...) asparagine glycosylation occurs at asparagine 2197. N-linked (GlcNAc...) asparagine glycosylation is present at asparagine 2337. The stretch at 2348-2389 is one YD 23 repeat; it reads YDLQGHLFAMESSSGEEYYVASDNTGTPLAVFSINGLMIKQL. Residue asparagine 2648 is glycosylated (N-linked (GlcNAc...) asparagine).

This sequence belongs to the tenascin family. Teneurin subfamily. As to quaternary structure, homodimer; disulfide-linked. Heterodimer with either TENM1 or TENM3. May also form heterodimer with TENM4. Isoform 2 (C-terminal globular domain) interacts with ADGRL1 isoform 2. Post-translationally, derives from the membrane form by proteolytic processing. In terms of processing, derives from the plasma membrane form by proteolytic cleavage and translocates to the nucleus. Homophilic binding of the C-terminal extracellular domain stimulates its proteolytic cleavage and release in the cytoplasmic. Is subjected to rapid degradation by the proteasome pathway. As to expression, highly expressed in heart, followed by brain, liver, kidney and fetal brain and weakly expressed in lung and testis. No expression was detected in skeletal muscle, pancreas, spleen, ovary and fetal liver.

It is found in the cell membrane. The protein resides in the presynaptic cell membrane. The protein localises to the postsynaptic cell membrane. Its subcellular location is the endoplasmic reticulum. It localises to the golgi apparatus. It is found in the synapse. The protein resides in the cell projection. The protein localises to the dendritic spine. Its subcellular location is the filopodium. It localises to the growth cone. It is found in the nucleus. The protein resides in the PML body. Its function is as follows. Involved in neural development, regulating the establishment of proper connectivity within the nervous system. Acts as a ligand of the ADGRL1 and ADGRL3 receptors that are expressed at the surface of adjacent cells. Promotes the formation of filopodia and enlarged growth cone in neuronal cells. Mediates axon guidance and homophilic and heterophilic cell-cell adhesion. May function as a cellular signal transducer. Functionally, acts as a ligand of the ADGRL1 receptor. Mediates axon guidance and heterophilic cell-cell adhesion. In terms of biological role, induces gene transcription inhibition. The sequence is that of Teneurin-2 (TENM2) from Homo sapiens (Human).